Reading from the N-terminus, the 196-residue chain is Chloroplastic ATP-dependent Clp protease proteolytic subunit 1 (196 aa).

The active-site Nucleophile is Ser-101. His-126 is an active-site residue.

The protein belongs to the peptidase S14 family. As to quaternary structure, component of the chloroplastic Clp protease core complex which consist of at least 16 proteins: CLPP4 (3 copies), CLPP5 (3 copies), CLPR4 (2 copies), ClpP1 (1 copy), CLPP6 (1 copy), CLPR2 (1 copy), CLPT1 (1 copy), CLPT2 (1 copy) and 3 copies of CLPP3 and/or CLPR1 and/or CLPR3. The core complex is organized in two heptameric rings, one containing CLPP3,4,5,6 in a 1:2:3:1 ratio and the other CLPP1 and CLPR1,2,3,4 in a 3:1:1:1:1 ratio. In terms of tissue distribution, mostly expressed in leaves. Also detected in stems, and to a lower extent, in roots (at protein level).

The protein localises to the plastid. The protein resides in the chloroplast stroma. The catalysed reaction is Hydrolysis of proteins to small peptides in the presence of ATP and magnesium. alpha-casein is the usual test substrate. In the absence of ATP, only oligopeptides shorter than five residues are hydrolyzed (such as succinyl-Leu-Tyr-|-NHMec, and Leu-Tyr-Leu-|-Tyr-Trp, in which cleavage of the -Tyr-|-Leu- and -Tyr-|-Trp bonds also occurs).. Its function is as follows. Cleaves peptides in various proteins in a process that requires ATP hydrolysis. Has a chymotrypsin-like activity. Plays a major role in the degradation of misfolded proteins. The chain is Chloroplastic ATP-dependent Clp protease proteolytic subunit 1 from Arabidopsis thaliana (Mouse-ear cress).